Consider the following 370-residue polypeptide: MEDLKVTPLRGVYEEYGGKIVDFAGYELPTQFKGFLHEHHTVREKAGLFDVSHMGEAMVTGKDAGKFIQYLMTNDINVLKDNEVLYTFMCNEDGGVIDDLLVYKFAGDEFFLVINASNKDKDVKWIMGHKGDFDVEIVDVSDSIAQLAFQGPLAEEILQKIVDVDLQEIKFFKLKRDVLVDGKKCLVSRTGYTGEDGFEIYCKPEDAKGLWHAILNAGKEEGAQPIGLGARDTLRFEASLLLYGNEMDETITPLEVGMGFFVKLKVEEDFIGKDALIKQKAEGITRKLVGFELLDKGIPRHGYEVIKDGKVIGHVTTGYKSPTLNKAIGLALVEEQYSKIGTEFNIKVRKKELKAVAIDKRFYTKKTKTK.

The protein belongs to the GcvT family. The glycine cleavage system is composed of four proteins: P, T, L and H.

It catalyses the reaction N(6)-[(R)-S(8)-aminomethyldihydrolipoyl]-L-lysyl-[protein] + (6S)-5,6,7,8-tetrahydrofolate = N(6)-[(R)-dihydrolipoyl]-L-lysyl-[protein] + (6R)-5,10-methylene-5,6,7,8-tetrahydrofolate + NH4(+). In terms of biological role, the glycine cleavage system catalyzes the degradation of glycine. This chain is Aminomethyltransferase, found in Clostridium botulinum (strain Langeland / NCTC 10281 / Type F).